A 240-amino-acid chain; its full sequence is Phosphatidylserine decarboxylase proenzyme (240 aa).

Serine 209 acts as the Schiff-base intermediate with substrate; via pyruvic acid in catalysis. Serine 209 is modified (pyruvic acid (Ser); by autocatalysis).

This sequence belongs to the phosphatidylserine decarboxylase family. PSD-A subfamily. As to quaternary structure, heterodimer of a large membrane-associated beta subunit and a small pyruvoyl-containing alpha subunit. Pyruvate is required as a cofactor. In terms of processing, is synthesized initially as an inactive proenzyme. Formation of the active enzyme involves a self-maturation process in which the active site pyruvoyl group is generated from an internal serine residue via an autocatalytic post-translational modification. Two non-identical subunits are generated from the proenzyme in this reaction, and the pyruvate is formed at the N-terminus of the alpha chain, which is derived from the carboxyl end of the proenzyme. The post-translation cleavage follows an unusual pathway, termed non-hydrolytic serinolysis, in which the side chain hydroxyl group of the serine supplies its oxygen atom to form the C-terminus of the beta chain, while the remainder of the serine residue undergoes an oxidative deamination to produce ammonia and the pyruvoyl prosthetic group on the alpha chain.

It localises to the cell membrane. It carries out the reaction a 1,2-diacyl-sn-glycero-3-phospho-L-serine + H(+) = a 1,2-diacyl-sn-glycero-3-phosphoethanolamine + CO2. It participates in phospholipid metabolism; phosphatidylethanolamine biosynthesis; phosphatidylethanolamine from CDP-diacylglycerol: step 2/2. Its function is as follows. Catalyzes the formation of phosphatidylethanolamine (PtdEtn) from phosphatidylserine (PtdSer). The sequence is that of Phosphatidylserine decarboxylase proenzyme from Mycobacterium ulcerans (strain Agy99).